The chain runs to 188 residues: Holliday junction branch migration complex subunit RuvA (188 aa).

The domain I stretch occupies residues 1–63; the sequence is MIEIIEGIYK…QEDMTIYGFD (63 aa). Residues 64–142 form a domain II region; sequence SKVKKETFEK…VVEVNEEMLE (79 aa). A region of interest (flexible linker) is located at residue Glu142. The interval 142-188 is domain III; the sequence is EAIEALVSLGYSKTQARNAVSKVLKESPNISNVSKIIKEALKILAKI.

It belongs to the RuvA family. As to quaternary structure, homotetramer. Forms an RuvA(8)-RuvB(12)-Holliday junction (HJ) complex. HJ DNA is sandwiched between 2 RuvA tetramers; dsDNA enters through RuvA and exits via RuvB. An RuvB hexamer assembles on each DNA strand where it exits the tetramer. Each RuvB hexamer is contacted by two RuvA subunits (via domain III) on 2 adjacent RuvB subunits; this complex drives branch migration. In the full resolvosome a probable DNA-RuvA(4)-RuvB(12)-RuvC(2) complex forms which resolves the HJ.

The protein localises to the cytoplasm. Its function is as follows. The RuvA-RuvB-RuvC complex processes Holliday junction (HJ) DNA during genetic recombination and DNA repair, while the RuvA-RuvB complex plays an important role in the rescue of blocked DNA replication forks via replication fork reversal (RFR). RuvA specifically binds to HJ cruciform DNA, conferring on it an open structure. The RuvB hexamer acts as an ATP-dependent pump, pulling dsDNA into and through the RuvAB complex. HJ branch migration allows RuvC to scan DNA until it finds its consensus sequence, where it cleaves and resolves the cruciform DNA. The chain is Holliday junction branch migration complex subunit RuvA from Fervidobacterium nodosum (strain ATCC 35602 / DSM 5306 / Rt17-B1).